A 202-amino-acid chain; its full sequence is Phosphatidyl-N-methylethanolamine N-methyltransferase (202 aa).

Residues 1–12 (MTTLSDYVDFSQ) lie on the Lumenal side of the membrane. An intramembrane region (helical) is located at residues 13-33 (DSFKYAALSIAFNPIFWNVVA). Residues 34–45 (RAEYRSHFLTRI) lie on the Lumenal side of the membrane. The chain crosses the membrane as a helical span at residues 46–66 (FGSPYRGCYFLAITIFSLGIL). The Cytoplasmic portion of the chain corresponds to 67–90 (RDHIYQQALEDQPYYAPVHQPVLG). A helical transmembrane segment spans residues 91 to 111 (GALFAVGSVLVLSSMYALGVT). Residue 95-97 (AVG) participates in S-adenosyl-L-methionine binding. Residues 112–154 (GTYLGDYFGILMDAPVTGFPFNVTGSPMYWGSTLNFLGVALYK) are Lumenal-facing. A helical membrane pass occupies residues 155–175 (GKVAGILLTALVFVLYWFALK). At 176–202 (WEDPFTAEIYAKRERERAKSKRGGKNQ) the chain is on the cytoplasmic side. Residue 177-178 (ED) participates in S-adenosyl-L-methionine binding.

The protein belongs to the class VI-like SAM-binding methyltransferase superfamily. PEMT/PEM2 methyltransferase family.

It localises to the endoplasmic reticulum membrane. The protein resides in the mitochondrion membrane. The catalysed reaction is a 1,2-diacyl-sn-glycero-3-phospho-N-methylethanolamine + S-adenosyl-L-methionine = a 1,2-diacyl-sn-glycero-3-phospho-N,N-dimethylethanolamine + S-adenosyl-L-homocysteine + H(+). It catalyses the reaction a 1,2-diacyl-sn-glycero-3-phospho-N,N-dimethylethanolamine + S-adenosyl-L-methionine = a 1,2-diacyl-sn-glycero-3-phosphocholine + S-adenosyl-L-homocysteine + H(+). It functions in the pathway phospholipid metabolism; phosphatidylcholine biosynthesis. Its function is as follows. Catalyzes the second two steps of the methylation pathway of phosphatidylcholine biosynthesis, the SAM-dependent methylation of phosphatidylmonomethylethanolamine (PMME) to phosphatidyldimethylethanolamine (PDME) and of PDME to phosphatidylcholine (PC). The protein is Phosphatidyl-N-methylethanolamine N-methyltransferase of Emericella nidulans (strain FGSC A4 / ATCC 38163 / CBS 112.46 / NRRL 194 / M139) (Aspergillus nidulans).